We begin with the raw amino-acid sequence, 343 residues long: Protein RecA (343 aa).

Residue 65–72 (GPESSGKT) participates in ATP binding.

Belongs to the RecA family.

Its subcellular location is the cytoplasm. In terms of biological role, can catalyze the hydrolysis of ATP in the presence of single-stranded DNA, the ATP-dependent uptake of single-stranded DNA by duplex DNA, and the ATP-dependent hybridization of homologous single-stranded DNAs. It interacts with LexA causing its activation and leading to its autocatalytic cleavage. This chain is Protein RecA, found in Pseudoalteromonas atlantica (strain T6c / ATCC BAA-1087).